A 364-amino-acid chain; its full sequence is Acidic fibroblast growth factor intracellular-binding protein (364 aa).

At Thr-2 the chain carries N-acetylthreonine.

In terms of assembly, binds to internalized FGF1; this interaction is increased in the presence of CSNKB, suggesting a possible cooperative interaction between CSNKB and FIBP in binding to FGF1. In terms of tissue distribution, highly expressed in heart, skeletal muscle and pancreas. Expressed at lower levels in brain. Also found in placenta, liver and kidney.

Its subcellular location is the nucleus. It is found in the endomembrane system. Functionally, may be involved in mitogenic function of FGF1. May mediate with IER2 FGF-signaling in the establishment of laterality in the embryo. This Homo sapiens (Human) protein is Acidic fibroblast growth factor intracellular-binding protein (FIBP).